Here is a 106-residue protein sequence, read N- to C-terminus: Nucleoid-associated protein PD_1058 (106 aa).

The protein belongs to the YbaB/EbfC family. As to quaternary structure, homodimer.

Its subcellular location is the cytoplasm. The protein resides in the nucleoid. Functionally, binds to DNA and alters its conformation. May be involved in regulation of gene expression, nucleoid organization and DNA protection. The polypeptide is Nucleoid-associated protein PD_1058 (Xylella fastidiosa (strain Temecula1 / ATCC 700964)).